Consider the following 181-residue polypeptide: Transcription termination/antitermination protein NusG (181 aa).

In terms of domain architecture, KOW spans 130–161 (PGEMVRVNDGPFADFNGVVEEVDYEKSRLKVS).

It belongs to the NusG family. In terms of assembly, monomer. Interacts with the transcription termination factor Rho and with RNA polymerase.

In terms of biological role, participates in transcription elongation, termination and antitermination. In the absence of Rho, increases the rate of transcription elongation by the RNA polymerase (RNAP), probably by partially suppressing pausing. In the presence of Rho, modulates most Rho-dependent termination events by interacting with the RNAP to render the complex more susceptible to the termination activity of Rho. May be required to overcome a kinetic limitation of Rho to function at certain terminators. Also involved in ribosomal RNA transcriptional antitermination. The sequence is that of Transcription termination/antitermination protein NusG from Salmonella typhi.